Consider the following 511-residue polypeptide: Histidine ammonia-lyase (511 aa).

The 5-imidazolinone (Ala-Gly) cross-link spans 143–145 (ASG). 2,3-didehydroalanine (Ser) is present on S144.

This sequence belongs to the PAL/histidase family. Post-translationally, contains an active site 4-methylidene-imidazol-5-one (MIO), which is formed autocatalytically by cyclization and dehydration of residues Ala-Ser-Gly.

It is found in the cytoplasm. The enzyme catalyses L-histidine = trans-urocanate + NH4(+). The protein operates within amino-acid degradation; L-histidine degradation into L-glutamate; N-formimidoyl-L-glutamate from L-histidine: step 1/3. The polypeptide is Histidine ammonia-lyase (Vibrio parahaemolyticus serotype O3:K6 (strain RIMD 2210633)).